A 244-amino-acid polypeptide reads, in one-letter code: Adiponectin (244 aa).

The signal sequence occupies residues 1 to 18 (MLLLGAVLLLLALPGHDQ). Residues threonine 21 and threonine 22 are each glycosylated (O-linked (GalNAc...) threonine). Lysine 33 is subject to 5-hydroxylysine. Cysteine 36 is subject to S-(2-succinyl)cysteine. The interval 40-101 (MAGIPGHPGH…RGFPGIQGRK (62 aa)) is disordered. In terms of domain architecture, Collagen-like spans 42–107 (GIPGHPGHNG…QGRKGEPGEG (66 aa)). 4-hydroxyproline is present on residues proline 44, proline 47, and proline 53. Positions 55-70 (RDGRDGTPGEKGEKGD) are enriched in basic and acidic residues. A 5-hydroxylysine mark is found at lysine 65 and lysine 68. Residues lysine 65 and lysine 68 are each glycosylated (O-linked (Gal...) hydroxylysine; partial). Residues proline 71 and proline 76 each carry the 4-hydroxyproline; partial modification. Lysine 77 is subject to 5-hydroxylysine. Lysine 77 carries an O-linked (Gal...) hydroxylysine; partial glycan. Proline 91 is modified (4-hydroxyproline). 4-hydroxyproline; partial is present on proline 95. Lysine 101 is modified (5-hydroxylysine). The O-linked (Gal...) hydroxylysine; partial glycan is linked to lysine 101. Positions 108–244 (AYVYRSAFSV…TGFLLYHDTN (137 aa)) constitute a C1q domain.

As to quaternary structure, homomultimer. Forms trimers, hexamers and 12- to 18-mers. The trimers (low molecular weight complexes / LMW) are assembled via non-covalent interactions of the collagen-like domains in a triple helix and hydrophobic interactions within the globular C1q domain. Several trimers can associate to form disulfide-linked hexamers (middle molecular weight complexes / MMW) and larger complexes (higher molecular weight / HMW). The HMW-complex assembly is also modulated by the degree of lysine hydroxylation and glycosylation. LMW, MMW and HMW complexes bind to HBEGF, MMW and HMW complexes bind to PDGFB, and HMW complex binds to FGF2. Interacts with CTRP9 via the C1q domain (heterotrimeric complex). Post-translationally, HMW complexes are more extensively glycosylated than smaller oligomers. Hydroxylation and glycosylation of the lysine residues within the collagen-like domain of adiponectin seem to be critically involved in regulating the formation and/or secretion of HMW complexes and consequently contribute to the insulin-sensitizing activity of adiponectin in hepatocytes. O-glycosylated. Not N-glycosylated. O-linked glycans on hydroxylysines consist of Glc-Gal disaccharides bound to the oxygen atom of post-translationally added hydroxyl groups. Sialylated to varying degrees depending on tissue. Thr-22 appears to be the major site of sialylation. Higher sialylation found in SGBS adipocytes than in HEK fibroblasts. Sialylation is not required neither for heterodimerization nor for secretion. Not sialylated on the glycosylated hydroxylysines. Desialylated forms are rapidly cleared from the circulation. In terms of processing, succination of Cys-36 by the Krebs cycle intermediate fumarate, which leads to S-(2-succinyl)cysteine residues, inhibits polymerization and secretion of adiponectin. Adiponectin is a major target for succination in both adipocytes and adipose tissue of diabetic mammals. It was proposed that succination of proteins is a biomarker of mitochondrial stress and accumulation of Krebs cycle intermediates in adipose tissue in diabetes and that succination of adiponectin may contribute to the decrease in plasma adiponectin in diabetes. In terms of tissue distribution, synthesized exclusively by adipocytes and secreted into plasma.

It localises to the secreted. With respect to regulation, polymerization and secretion of adiponectin is inhibited by succination of cysteine residues by the Krebs cycle intermediate fumarate, which leads to S-(2-succinyl)cysteine residues. Functionally, important adipokine involved in the control of fat metabolism and insulin sensitivity, with direct anti-diabetic, anti-atherogenic and anti-inflammatory activities. Stimulates AMPK phosphorylation and activation in the liver and the skeletal muscle, enhancing glucose utilization and fatty-acid combustion. Antagonizes TNF-alpha by negatively regulating its expression in various tissues such as liver and macrophages, and also by counteracting its effects. Inhibits endothelial NF-kappa-B signaling through a cAMP-dependent pathway. May play a role in cell growth, angiogenesis and tissue remodeling by binding and sequestering various growth factors with distinct binding affinities, depending on the type of complex, LMW, MMW or HMW. The protein is Adiponectin (ADIPOQ) of Homo sapiens (Human).